Reading from the N-terminus, the 337-residue chain is Mycothiol acetyltransferase (337 aa).

N-acetyltransferase domains are found at residues 11–151 and 154–337; these read LDER…FELP and VRLR…MYRK. Residue E37 participates in 1D-myo-inositol 2-(L-cysteinylamino)-2-deoxy-alpha-D-glucopyranoside binding. 81 to 83 provides a ligand contact to acetyl-CoA; it reads LVI. Residue E182 participates in 1D-myo-inositol 2-(L-cysteinylamino)-2-deoxy-alpha-D-glucopyranoside binding. The tract at residues 210–246 is disordered; it reads RPTGSGDGDVADGGSTDGGPADSGSADGGAGEGGTGD. Residues 221 to 234 show a composition bias toward low complexity; sequence DGGSTDGGPADSGS. Positions 235 to 246 are enriched in gly residues; it reads ADGGAGEGGTGD. 2 residues coordinate 1D-myo-inositol 2-(L-cysteinylamino)-2-deoxy-alpha-D-glucopyranoside: K257 and E271. Acetyl-CoA-binding positions include 275 to 277 and 282 to 288; these read VGV and QGGGLGR. Y309 lines the 1D-myo-inositol 2-(L-cysteinylamino)-2-deoxy-alpha-D-glucopyranoside pocket. Acetyl-CoA is bound at residue 314–319; the sequence is NTAAIR.

It belongs to the acetyltransferase family. MshD subfamily. As to quaternary structure, monomer.

It carries out the reaction 1D-myo-inositol 2-(L-cysteinylamino)-2-deoxy-alpha-D-glucopyranoside + acetyl-CoA = mycothiol + CoA + H(+). Functionally, catalyzes the transfer of acetyl from acetyl-CoA to desacetylmycothiol (Cys-GlcN-Ins) to form mycothiol. The sequence is that of Mycothiol acetyltransferase from Streptosporangium roseum (strain ATCC 12428 / DSM 43021 / JCM 3005 / KCTC 9067 / NCIMB 10171 / NRRL 2505 / NI 9100).